A 250-amino-acid chain; its full sequence is Uracil-DNA glycosylase (250 aa).

Aspartate 91 functions as the Proton acceptor in the catalytic mechanism.

The protein belongs to the uracil-DNA glycosylase (UDG) superfamily. UNG family.

It is found in the host nucleus. It carries out the reaction Hydrolyzes single-stranded DNA or mismatched double-stranded DNA and polynucleotides, releasing free uracil.. Functionally, excises uracil residues from the DNA which can arise as a result of misincorporation of dUMP residues by DNA polymerase or due to deamination of cytosine. Its function is as follows. Excises uracil residues from the DNA which can arise as a result of misincorporation of dUMP residues by DNA polymerase or deamination of cytosines. Therefore may reduce deleterious uracil incorporation into the viral genome, particularly in terminally differentiated cells which lack DNA repair enzymes. This Homo sapiens (Human) protein is Uracil-DNA glycosylase (UL114).